The following is a 251-amino-acid chain: tRNA (guanine-N(7)-)-methyltransferase (251 aa).

Residues glutamate 80, glutamate 105, aspartate 132, and aspartate 155 each coordinate S-adenosyl-L-methionine. The active site involves aspartate 155. Residues lysine 159, aspartate 191, and 228-231 (TKFE) each bind substrate.

Belongs to the class I-like SAM-binding methyltransferase superfamily. TrmB family.

The catalysed reaction is guanosine(46) in tRNA + S-adenosyl-L-methionine = N(7)-methylguanosine(46) in tRNA + S-adenosyl-L-homocysteine. Its pathway is tRNA modification; N(7)-methylguanine-tRNA biosynthesis. Functionally, catalyzes the formation of N(7)-methylguanine at position 46 (m7G46) in tRNA. This chain is tRNA (guanine-N(7)-)-methyltransferase, found in Histophilus somni (strain 2336) (Haemophilus somnus).